Reading from the N-terminus, the 510-residue chain is Histidine ammonia-lyase (510 aa).

Residues 143–145 (ASG) constitute a cross-link (5-imidazolinone (Ala-Gly)). A 2,3-didehydroalanine (Ser) modification is found at Ser-144.

The protein belongs to the PAL/histidase family. Contains an active site 4-methylidene-imidazol-5-one (MIO), which is formed autocatalytically by cyclization and dehydration of residues Ala-Ser-Gly.

It localises to the cytoplasm. It catalyses the reaction L-histidine = trans-urocanate + NH4(+). It participates in amino-acid degradation; L-histidine degradation into L-glutamate; N-formimidoyl-L-glutamate from L-histidine: step 1/3. The sequence is that of Histidine ammonia-lyase from Yersinia pseudotuberculosis serotype I (strain IP32953).